We begin with the raw amino-acid sequence, 83 residues long: Large ribosomal subunit protein eL43 (83 aa).

Zn(2+) is bound by residues Cys38, Cys41, Cys56, and Cys59. A C4-type zinc finger spans residues 38 to 59 (CPVCGRRAVRRISTGIWQCKKC).

Belongs to the eukaryotic ribosomal protein eL43 family. Putative zinc-binding subfamily. As to quaternary structure, part of the 50S ribosomal subunit. Zn(2+) is required as a cofactor.

Functionally, binds to the 23S rRNA. The sequence is that of Large ribosomal subunit protein eL43 from Pyrococcus abyssi (strain GE5 / Orsay).